The sequence spans 393 residues: Sugar efflux transporter A (393 aa).

A run of 12 helical transmembrane segments spans residues 22-42 (VIAFLTGIAGALQLPTLSLFL), 51-71 (FMVGLFYTGSAVIGIVVSQIL), 82-102 (KTLILQCCLLGALACLLYAWN), 107-127 (VLLFIGVLLSSFGSTANPQLF), 152-172 (ISLSWVIGPPVAFALALGFGF), 174-194 (AMYLTAAVVFVLCGLLVWLLL), 219-239 (LLLFTACTLMWTCNGIYLINM), 253-273 (LAGVMMGTAAGLEIPVMLLAG), 287-307 (LAVIAGLIFYTGLTLLNGSWA), 308-328 (LLALQLLNAIFIGILAGMGML), 344-364 (LFTNTTRVGWIISGSLAGIVA), and 366-386 (VWSYHAGFVIAIAMLAGAAVC).

It belongs to the major facilitator superfamily. Set transporter family.

The protein resides in the cell inner membrane. In terms of biological role, involved in the efflux of sugars. The physiological role may be the reduction of the intracellular concentration of toxic sugars or sugar metabolites. Transports IPTG, lactose and arabinose. This chain is Sugar efflux transporter A (sotA), found in Dickeya chrysanthemi (Pectobacterium chrysanthemi).